The primary structure comprises 281 residues: Glyoxalase 1 (281 aa).

2 VOC domains span residues 4-127 and 132-251; these read RALH…IGKA and KVLR…FVGD.

It belongs to the glyoxalase I family. In terms of tissue distribution, expressed in the following tissues in both larvae and adults: pharynx, pharyngeal-intestinal valve, intestine, anal sphincter, vulval muscle, seam cells and the nervous system.

Thought to act as a glyoxalase. May remove methylglyoxal from mitochondrial proteins. Has roles in reducing oxidative stress and increasing lifespan. The polypeptide is Glyoxalase 1 (glod-4) (Caenorhabditis elegans).